Here is a 359-residue protein sequence, read N- to C-terminus: MKKYLALALIAPLLISCSTTKKGDTYNEAWVKDTNGFDILMGQFAHNIENIWGFKEVVIAGPKDYVKYTDQYQTRSHINFDDGTITIETIAGTEPAAHLRRAIIKTLLMGDDPSSVDLYSDVDDITISKEPFLYGQVVDNTGQPIRWEGRASNFADYLLKNRLKSRSNGLRIIYSVTINMVPNHLDKRAHKYLGMVRQASRKYGVDESLILAIMQTESSFNPYAVSRSDALGLMQVVQHTAGKDVFRSQGKSGTPSRNFLFDPASNIDTGTAYLAMLNNVYLGGIDNPTSRRYAVITAYNGGAGSVLRVFSNDKIQAANIINTMTPGDVYQTLTTRHPSAESRRYLYKVNTAQKSYRRR.

The first 16 residues, 1-16 (MKKYLALALIAPLLIS), serve as a signal peptide directing secretion. Cysteine 17 carries the N-palmitoyl cysteine lipid modification. A lipid anchor (S-diacylglycerol cysteine) is attached at cysteine 17.

The protein belongs to the transglycosylase Slt family.

It is found in the cell outer membrane. The catalysed reaction is Exolytic cleavage of the (1-&gt;4)-beta-glycosidic linkage between N-acetylmuramic acid (MurNAc) and N-acetylglucosamine (GlcNAc) residues in peptidoglycan, from either the reducing or the non-reducing ends of the peptidoglycan chains, with concomitant formation of a 1,6-anhydrobond in the MurNAc residue.. Its function is as follows. Murein-degrading enzyme. May play a role in recycling of muropeptides during cell elongation and/or cell division. This Escherichia coli (strain SE11) protein is Membrane-bound lytic murein transglycosylase C.